The sequence spans 341 residues: MNNYLRKLVEGQHLTEEEMYKAGLLLLSENILESEIAAFLVLLKAKGETAEEIYGLVRALREKALPFSNHIQGAMDNCGTGGDGAQTFNISTTSAFVLAGAGVKVAKHGNRAVSSKTGSADLLEELGVNISSTPNEIDYLLEHVGIAFLFAPVMHPALRRIMKIRKELNVPTIFNLIGPLTNPVNLETQFVGIYKRDMLLPVAEVLQKLGRKQALVVNGSGFLDEASLQGENHVVLLKDNEIVEMSIDPEKYGFSRVKNEEIRGGNSKENAKITLEVLSGEKSVYRDTVLLNAGLALFANGKTETIEEGIKLAAHSIDSGKALTKLNLLIAASNEKLERVN.

5-phospho-alpha-D-ribose 1-diphosphate is bound by residues glycine 79, glycine 82–aspartate 83, threonine 87, asparagine 89–threonine 92, lysine 107–serine 115, and serine 119. Residue glycine 79 coordinates anthranilate. Serine 91 serves as a coordination point for Mg(2+). Asparagine 110 serves as a coordination point for anthranilate. Residue arginine 165 participates in anthranilate binding. Mg(2+) is bound by residues aspartate 224 and glutamate 225.

This sequence belongs to the anthranilate phosphoribosyltransferase family. As to quaternary structure, homodimer. Requires Mg(2+) as cofactor.

It carries out the reaction N-(5-phospho-beta-D-ribosyl)anthranilate + diphosphate = 5-phospho-alpha-D-ribose 1-diphosphate + anthranilate. It functions in the pathway amino-acid biosynthesis; L-tryptophan biosynthesis; L-tryptophan from chorismate: step 2/5. Catalyzes the transfer of the phosphoribosyl group of 5-phosphorylribose-1-pyrophosphate (PRPP) to anthranilate to yield N-(5'-phosphoribosyl)-anthranilate (PRA). The chain is Anthranilate phosphoribosyltransferase from Bacillus cereus (strain B4264).